The sequence spans 465 residues: Serine carboxypeptidase 24 (465 aa).

An N-terminal signal peptide occupies residues 1 to 24; sequence MARTHFIFLLLVALLSTTFPSSSS. N-linked (GlcNAc...) asparagine glycans are attached at residues Asn54, Asn105, and Asn139. Intrachain disulfides connect Cys88-Cys349, Cys249-Cys260, and Cys285-Cys317. Residue Ser181 is part of the active site. N-linked (GlcNAc...) asparagine glycans are attached at residues Asn250, Asn293, and Asn338. Residues 287–316 constitute a propeptide, linker peptide; sequence AAQQKKNTTGFFVRMKNTLLRRRLVSGYDP. Catalysis depends on residues Asp386 and His438.

Belongs to the peptidase S10 family. In terms of assembly, heterodimer. N-glycosylated. Expressed in shoots, leaves, cauline leaves, siliques and flowers. Expressed a low levels in roots and stems.

It is found in the secreted. The protein resides in the extracellular space. It catalyses the reaction Preferential release of a C-terminal arginine or lysine residue.. Completely inhibited by phenylmethylsulfonyl fluoride (PMSF) and partially by leupeptin. Functionally, active serine carboxypeptidase with broad substrate preference, including basic and hydrophilic groups. Processes a protein involved in an early event in the brassinosteroid signaling pathway. The sequence is that of Serine carboxypeptidase 24 (SCPL24) from Arabidopsis thaliana (Mouse-ear cress).